A 565-amino-acid chain; its full sequence is Putative pentatricopeptide repeat-containing protein At3g05240 (565 aa).

PPR repeat units follow at residues 37-70 (NVIPLSRLIDFCTTCPETMNLSYARSVFESIDCP), 71-105 (SVYIWNSMIRGYSNSPNPDKALIFYQEMLRKGYSP), 106-140 (DYFTFPYVLKACSGLRDIQFGSCVHGFVVKTGFEV), 141-171 (NMYVSTCLLHMYMCCGEVNYGLRVFEDIPQW), 172-206 (NVVAWGSLISGFVNNNRFSDAIEAFREMQSNGVKA), 207-241 (NETIMVDLLVACGRCKDIVTGKWFHGFLQGLGFDP), 250-280 (NVILATSLIDMYAKCGDLRTARYLFDGMPER), 281-315 (TLVSWNSIITGYSQNGDAEEALCMFLDMLDLGIAP), 316-350 (DKVTFLSVIRASMIQGCSQLGQSIHAYVSKTGFVK), 351-381 (DAAIVCALVNMYAKTGDAESAKKAFEDLEKK), 382-416 (DTIAWTVVIIGLASHGHGNEALSIFQRMQEKGNAT), 418-448 (DGITYLGVLYACSHIGLVEEGQRYFAEMRDL), and 454-484 (TVEHYGCMVDILSRAGRFEEAERLVKTMPVK). The interval 489–564 (IWGALLNGCD…VLGHSSVETM (76 aa)) is type E motif.

The protein belongs to the PPR family. PCMP-E subfamily.

This Arabidopsis thaliana (Mouse-ear cress) protein is Putative pentatricopeptide repeat-containing protein At3g05240 (PCMP-E82).